Here is a 124-residue protein sequence, read N- to C-terminus: MAITKDDILEAVGAMSVMELNDLVKAFEEKFGVSAAAMAVAAAPGAGGAAAAEEKTEFNVILAEVGSNKVGVIKAVREITGLGLKEAKDLVDGAPKPVKEGVDKATADDAKKKLEDAGAKVDVK.

This sequence belongs to the bacterial ribosomal protein bL12 family. In terms of assembly, homodimer. Part of the ribosomal stalk of the 50S ribosomal subunit. Forms a multimeric L10(L12)X complex, where L10 forms an elongated spine to which 2 to 4 L12 dimers bind in a sequential fashion. Binds GTP-bound translation factors.

Forms part of the ribosomal stalk which helps the ribosome interact with GTP-bound translation factors. Is thus essential for accurate translation. The chain is Large ribosomal subunit protein bL12 from Cupriavidus metallidurans (strain ATCC 43123 / DSM 2839 / NBRC 102507 / CH34) (Ralstonia metallidurans).